Here is a 489-residue protein sequence, read N- to C-terminus: MSVYGLQRLYIAGAHADATSGKTFDTFDPATGELLARVQQASADDVDRAVASAREGQREWAAMTAMQRSRILRRAVELLRERNDALAELEMRDTGKPIAETRAVDIVTGADVIEYYAGLATAIEGLQVPLRPESFVYTRREPLGVCAGIGAWNYPIQIACWKSAPALAAGNAMIFKPSEVTPLSALKLAEIYTEAGVPAGVFNVVQGDGSVGALLSAHPGIAKVSFTGGVETGKKVMSLAGASSLKEVTMELGGKSPLIVFDDADLDRAADIAVTANFFSAGQVCTNGTRVFVQQAVKDAFVERVLARVARIRVGKPSDPDTNFGPLASAAQLDKVLGYIDSGKAEGAKLLAGGARLVNDHFASGQYVAPTVFGDCRDDMRIVREEIFGPVMSILPFETEDEAIARANATDYGLAAGVVTENLSRAHRAIHRLEAGICWINTWGESPAEMPVGGYKQSGVGRENGITTLEHYTRIKSVQVELGRYQPVF.

The K(+) site is built by threonine 26 and aspartate 93. Position 150–152 (150–152 (GAW)) interacts with NAD(+). Lysine 162 functions as the Charge relay system in the catalytic mechanism. 176–179 (KPSE) contributes to the NAD(+) binding site. Residue valine 180 coordinates K(+). 229–232 (GVET) is an NAD(+) binding site. A K(+)-binding site is contributed by leucine 245. The active-site Proton acceptor is glutamate 251. 3 residues coordinate NAD(+): glycine 253, cysteine 285, and glutamate 386. Cysteine 285 acts as the Nucleophile in catalysis. Residue cysteine 285 is modified to Cysteine sulfenic acid (-SOH). K(+) is bound by residues lysine 456 and glycine 459. Residue glutamate 463 is the Charge relay system of the active site.

The protein belongs to the aldehyde dehydrogenase family. Dimer of dimers. The cofactor is K(+).

It carries out the reaction betaine aldehyde + NAD(+) + H2O = glycine betaine + NADH + 2 H(+). It functions in the pathway amine and polyamine biosynthesis; betaine biosynthesis via choline pathway; betaine from betaine aldehyde: step 1/1. Involved in the biosynthesis of the osmoprotectant glycine betaine. Catalyzes the irreversible oxidation of betaine aldehyde to the corresponding acid. This is Betaine aldehyde dehydrogenase from Burkholderia pseudomallei (strain K96243).